We begin with the raw amino-acid sequence, 453 residues long: CCA-adding enzyme (453 aa).

2 residues coordinate ATP: Ser-53 and Lys-56. CTP-binding residues include Ser-53 and Lys-56. Residues Asp-65, Asp-67, and Asp-119 each coordinate Mg(2+). The ATP site is built by His-142, Lys-161, and Tyr-170. Residues His-142, Lys-161, and Tyr-170 each contribute to the CTP site.

Belongs to the tRNA nucleotidyltransferase/poly(A) polymerase family. Archaeal CCA-adding enzyme subfamily. As to quaternary structure, homodimer. Mg(2+) is required as a cofactor.

The enzyme catalyses a tRNA precursor + 2 CTP + ATP = a tRNA with a 3' CCA end + 3 diphosphate. It catalyses the reaction a tRNA with a 3' CCA end + 2 CTP + ATP = a tRNA with a 3' CCACCA end + 3 diphosphate. In terms of biological role, catalyzes the addition and repair of the essential 3'-terminal CCA sequence in tRNAs without using a nucleic acid template. Adds these three nucleotides in the order of C, C, and A to the tRNA nucleotide-73, using CTP and ATP as substrates and producing inorganic pyrophosphate. tRNA 3'-terminal CCA addition is required both for tRNA processing and repair. Also involved in tRNA surveillance by mediating tandem CCA addition to generate a CCACCA at the 3' terminus of unstable tRNAs. While stable tRNAs receive only 3'-terminal CCA, unstable tRNAs are marked with CCACCA and rapidly degraded. The protein is CCA-adding enzyme of Pyrococcus furiosus (strain ATCC 43587 / DSM 3638 / JCM 8422 / Vc1).